An 800-amino-acid polypeptide reads, in one-letter code: Phenylalanine--tRNA ligase beta subunit (800 aa).

Residues 39–152 (AAGLSKIVVG…EDAVPGEEVF (114 aa)) form the tRNA-binding domain. The B5 domain maps to 405–480 (TSDVEVSSTL…RIYGYDRLPT (76 aa)). Positions 458, 464, 467, and 468 each coordinate Mg(2+). The 94-residue stretch at 707–800 (TKFPAVSRDV…LEEKVNAEVR (94 aa)) folds into the FDX-ACB domain.

Belongs to the phenylalanyl-tRNA synthetase beta subunit family. Type 1 subfamily. Tetramer of two alpha and two beta subunits. Mg(2+) serves as cofactor.

Its subcellular location is the cytoplasm. It carries out the reaction tRNA(Phe) + L-phenylalanine + ATP = L-phenylalanyl-tRNA(Phe) + AMP + diphosphate + H(+). This Streptococcus pneumoniae (strain ATCC BAA-255 / R6) protein is Phenylalanine--tRNA ligase beta subunit.